The sequence spans 384 residues: Brix domain-containing protein F44G4.1 (384 aa).

Disordered stretches follow at residues 1-58 (MAPK…KVVK) and 82-135 (SKAT…PQKE). Residues 18–48 (FVEEEVTGDVDEDGFEQAEDMPDEVDSDEDE) are compositionally biased toward acidic residues. Over residues 96 to 114 (LPKSQRGKALKRALRKDKR) the composition is skewed to basic residues. A compositionally biased stretch (basic and acidic residues) spans 115-127 (ARQGERAQIRDEL). The Brix domain occupies 177–360 (PKVMITMTPK…LKWLQKGTFD (184 aa)).

This is Brix domain-containing protein F44G4.1 from Caenorhabditis elegans.